The primary structure comprises 228 residues: Lipoprotein-releasing system ATP-binding protein LolD (228 aa).

Positions 5-228 constitute an ABC transporter domain; the sequence is FALSAISKSF…SGTLQNYTDY (224 aa). 40-47 serves as a coordination point for ATP; that stretch reads GPSGSGKS.

Belongs to the ABC transporter superfamily. Lipoprotein translocase (TC 3.A.1.125) family. The complex is composed of two ATP-binding proteins (LolD) and two transmembrane proteins (LolC and LolE).

It is found in the cell inner membrane. Part of the ABC transporter complex LolCDE involved in the translocation of mature outer membrane-directed lipoproteins, from the inner membrane to the periplasmic chaperone, LolA. Responsible for the formation of the LolA-lipoprotein complex in an ATP-dependent manner. The protein is Lipoprotein-releasing system ATP-binding protein LolD of Ehrlichia ruminantium (strain Gardel).